The sequence spans 308 residues: MVKAKWRSVDGIVLLNKPIGLSSNQALQRVRRLYQAAKAGHTGALDPLATGMLPLCLGEATKFSQYLLDADKRYLTCIQLGKRTTTGDREGEVLTEDSVPTLTDESLEEILNGFRGEIEQIPPMYSALKHEGKPLYEYARQGIVIERKRRRVTISNLTLVSRTEDTLTLDIQCSKGTYIRTIGEDIGEALGCGAHLHSLHRISTAGYLPENMMTLEEFEAIAEQGYDALDAHLITMDTAVEHFAKVELPESDTVNMMFGRTVPSPVSLEHEAVVRMYDQGTQRFLGLGQIKGAFIRPYRLVNTSEFSL.

Asp46 functions as the Nucleophile in the catalytic mechanism.

Belongs to the pseudouridine synthase TruB family. Type 1 subfamily.

It carries out the reaction uridine(55) in tRNA = pseudouridine(55) in tRNA. In terms of biological role, responsible for synthesis of pseudouridine from uracil-55 in the psi GC loop of transfer RNAs. In Marinomonas sp. (strain MWYL1), this protein is tRNA pseudouridine synthase B.